The sequence spans 351 residues: MSAAVTISIDAMGGDAAPDMVVEGVRMAHERLPHVRYLMFGDASRIEPLLARFPEIRGVCTIHHTEESVSMEAKPSQVLRQGRKSSMWLAVEAVQKGEAAGIVSAGNTGALMAVSKFVLRMLPGIDRPAIAGMFPTVKGETLMLDLGANVDCNSNNLVEFAVMGEVYARAVLGLEKPSIGLLNVGSEDMKGNDAVKAAAAALRDSHLPISFYGFVEGNDICGGTVDVVVTDGFTGNIALKTAEGTVKLYSTFLKEGFQSSLLAKFGYLFARHAINKVKVRTDPRRYNGAMFLGLNGIAVKSHGGTDAFGFANAVGVAVELVTHGYNDRIRKEFDRLKPAEVSPSQLAAGTR.

This sequence belongs to the PlsX family. In terms of assembly, homodimer. Probably interacts with PlsY.

The protein localises to the cytoplasm. It catalyses the reaction a fatty acyl-[ACP] + phosphate = an acyl phosphate + holo-[ACP]. It functions in the pathway lipid metabolism; phospholipid metabolism. Catalyzes the reversible formation of acyl-phosphate (acyl-PO(4)) from acyl-[acyl-carrier-protein] (acyl-ACP). This enzyme utilizes acyl-ACP as fatty acyl donor, but not acyl-CoA. In Paramagnetospirillum magneticum (strain ATCC 700264 / AMB-1) (Magnetospirillum magneticum), this protein is Phosphate acyltransferase.